The chain runs to 126 residues: KH homology domain-containing protein 1B (126 aa).

Residues 19 to 78 (PLVFDMEEDQEDYIFGPDDEYLHTLEVHSNTLIQLERWFSPTGQTRVTVVGPLKARLWVM) enclose the KH domain.

This sequence belongs to the KHDC1 family.

This Mus musculus (Mouse) protein is KH homology domain-containing protein 1B (Khdc1b).